A 296-amino-acid chain; its full sequence is Phosphoribosylaminoimidazole-succinocarboxamide synthase (296 aa).

The protein belongs to the SAICAR synthetase family.

The enzyme catalyses 5-amino-1-(5-phospho-D-ribosyl)imidazole-4-carboxylate + L-aspartate + ATP = (2S)-2-[5-amino-1-(5-phospho-beta-D-ribosyl)imidazole-4-carboxamido]succinate + ADP + phosphate + 2 H(+). Its pathway is purine metabolism; IMP biosynthesis via de novo pathway; 5-amino-1-(5-phospho-D-ribosyl)imidazole-4-carboxamide from 5-amino-1-(5-phospho-D-ribosyl)imidazole-4-carboxylate: step 1/2. This Geobacter sulfurreducens (strain ATCC 51573 / DSM 12127 / PCA) protein is Phosphoribosylaminoimidazole-succinocarboxamide synthase.